Here is a 135-residue protein sequence, read N- to C-terminus: UPF0355 protein SACOL0457 (135 aa).

It belongs to the UPF0355 family.

In Staphylococcus aureus (strain COL), this protein is UPF0355 protein SACOL0457.